A 481-amino-acid chain; its full sequence is 3-isopropylmalate dehydratase large subunit (481 aa).

3 residues coordinate [4Fe-4S] cluster: cysteine 357, cysteine 417, and cysteine 420. Residues 429–441 show a composition bias toward polar residues; it reads SPGQRCASTSNRN. A disordered region spans residues 429–451; that stretch reads SPGQRCASTSNRNFEGRQGKGGR.

Belongs to the aconitase/IPM isomerase family. LeuC type 1 subfamily. In terms of assembly, heterodimer of LeuC and LeuD. [4Fe-4S] cluster is required as a cofactor.

It carries out the reaction (2R,3S)-3-isopropylmalate = (2S)-2-isopropylmalate. Its pathway is amino-acid biosynthesis; L-leucine biosynthesis; L-leucine from 3-methyl-2-oxobutanoate: step 2/4. Its function is as follows. Catalyzes the isomerization between 2-isopropylmalate and 3-isopropylmalate, via the formation of 2-isopropylmaleate. The protein is 3-isopropylmalate dehydratase large subunit of Mycobacterium sp. (strain JLS).